Reading from the N-terminus, the 313-residue chain is Expansin-like A4 (313 aa).

The N-terminal stretch at 1 to 30 (MDDNGDVHFCHRATAVVALLLLHLVVVANA) is a signal peptide. One can recognise an Expansin-like EG45 domain in the interval 59-173 (GGACGFGAAP…RRIPCEYRES (115 aa)). Asn124 carries an N-linked (GlcNAc...) asparagine glycan. The Expansin-like CBD domain occupies 188–281 (THLAIRFLYQ…DWRPGEVYDT (94 aa)).

It belongs to the expansin family. Expansin-like A subfamily.

Its subcellular location is the secreted. This Oryza sativa subsp. japonica (Rice) protein is Expansin-like A4 (EXLA4).